We begin with the raw amino-acid sequence, 122 residues long: Ribosome-binding factor A (122 aa).

This sequence belongs to the RbfA family. As to quaternary structure, monomer. Binds 30S ribosomal subunits, but not 50S ribosomal subunits or 70S ribosomes.

It is found in the cytoplasm. Its function is as follows. One of several proteins that assist in the late maturation steps of the functional core of the 30S ribosomal subunit. Associates with free 30S ribosomal subunits (but not with 30S subunits that are part of 70S ribosomes or polysomes). Required for efficient processing of 16S rRNA. May interact with the 5'-terminal helix region of 16S rRNA. The protein is Ribosome-binding factor A of Opitutus terrae (strain DSM 11246 / JCM 15787 / PB90-1).